A 338-amino-acid polypeptide reads, in one-letter code: Aspartate carbamoyltransferase catalytic subunit (338 aa).

Residues arginine 72 and threonine 73 each coordinate carbamoyl phosphate. Residue lysine 100 participates in L-aspartate binding. 3 residues coordinate carbamoyl phosphate: arginine 122, histidine 152, and glutamine 155. 2 residues coordinate L-aspartate: arginine 186 and arginine 243. 2 residues coordinate carbamoyl phosphate: glycine 284 and proline 285.

Belongs to the aspartate/ornithine carbamoyltransferase superfamily. ATCase family. In terms of assembly, heterododecamer (2C3:3R2) of six catalytic PyrB chains organized as two trimers (C3), and six regulatory PyrI chains organized as three dimers (R2).

The catalysed reaction is carbamoyl phosphate + L-aspartate = N-carbamoyl-L-aspartate + phosphate + H(+). Its pathway is pyrimidine metabolism; UMP biosynthesis via de novo pathway; (S)-dihydroorotate from bicarbonate: step 2/3. In terms of biological role, catalyzes the condensation of carbamoyl phosphate and aspartate to form carbamoyl aspartate and inorganic phosphate, the committed step in the de novo pyrimidine nucleotide biosynthesis pathway. This is Aspartate carbamoyltransferase catalytic subunit from Acinetobacter baumannii (strain AB307-0294).